We begin with the raw amino-acid sequence, 102 residues long: Small ribosomal subunit protein uS10 (102 aa).

Belongs to the universal ribosomal protein uS10 family. As to quaternary structure, part of the 30S ribosomal subunit.

In terms of biological role, involved in the binding of tRNA to the ribosomes. The chain is Small ribosomal subunit protein uS10 from Mycoplasma mobile (strain ATCC 43663 / 163K / NCTC 11711) (Mesomycoplasma mobile).